Here is a 203-residue protein sequence, read N- to C-terminus: ATP-dependent dethiobiotin synthetase BioD (203 aa).

ATP is bound at residue 11 to 16; that stretch reads NVGKTI. Residue Thr15 coordinates Mg(2+). The active site involves Lys31. Thr35 is a binding site for substrate. ATP contacts are provided by residues Asp42 and 94 to 97; that span reads EGAG. Asp42 and Glu94 together coordinate Mg(2+).

This sequence belongs to the dethiobiotin synthetase family. As to quaternary structure, homodimer. Requires Mg(2+) as cofactor.

It is found in the cytoplasm. The catalysed reaction is (7R,8S)-7,8-diammoniononanoate + CO2 + ATP = (4R,5S)-dethiobiotin + ADP + phosphate + 3 H(+). The protein operates within cofactor biosynthesis; biotin biosynthesis; biotin from 7,8-diaminononanoate: step 1/2. Functionally, catalyzes a mechanistically unusual reaction, the ATP-dependent insertion of CO2 between the N7 and N8 nitrogen atoms of 7,8-diaminopelargonic acid (DAPA, also called 7,8-diammoniononanoate) to form a ureido ring. This Lawsonia intracellularis (strain PHE/MN1-00) protein is ATP-dependent dethiobiotin synthetase BioD.